The following is a 132-amino-acid chain: Large ribosomal subunit protein uL14 (132 aa).

Belongs to the universal ribosomal protein uL14 family. In terms of assembly, part of the 50S ribosomal subunit. Forms a cluster with proteins L3 and L24e, part of which may contact the 16S rRNA in 2 intersubunit bridges.

Its function is as follows. Binds to 23S rRNA. Forms part of two intersubunit bridges in the 70S ribosome. In Methanococcus maripaludis (strain DSM 14266 / JCM 13030 / NBRC 101832 / S2 / LL), this protein is Large ribosomal subunit protein uL14.